A 72-amino-acid polypeptide reads, in one-letter code: Small ribosomal subunit protein bS20 (72 aa).

Belongs to the bacterial ribosomal protein bS20 family.

Functionally, binds directly to 16S ribosomal RNA. The sequence is that of Small ribosomal subunit protein bS20 (rpsT) from Aeromonas hydrophila.